The following is a 481-amino-acid chain: ATP synthase subunit beta (481 aa).

ATP is bound at residue 160–167; sequence GGAGVGKT.

The protein belongs to the ATPase alpha/beta chains family. As to quaternary structure, F-type ATPases have 2 components, CF(1) - the catalytic core - and CF(0) - the membrane proton channel. CF(1) has five subunits: alpha(3), beta(3), gamma(1), delta(1), epsilon(1). CF(0) has three main subunits: a(1), b(2) and c(9-12). The alpha and beta chains form an alternating ring which encloses part of the gamma chain. CF(1) is attached to CF(0) by a central stalk formed by the gamma and epsilon chains, while a peripheral stalk is formed by the delta and b chains.

It is found in the cell inner membrane. The enzyme catalyses ATP + H2O + 4 H(+)(in) = ADP + phosphate + 5 H(+)(out). Its function is as follows. Produces ATP from ADP in the presence of a proton gradient across the membrane. The catalytic sites are hosted primarily by the beta subunits. This Stigmatella aurantiaca protein is ATP synthase subunit beta.